A 1169-amino-acid polypeptide reads, in one-letter code: C5a peptidase (1169 aa).

An N-terminal signal peptide occupies residues 1-31 (MRKKQKLPFDKLAIALMSTSILLNAQSDIKA). The interval 33 to 111 (TVTEDTPATE…ETIRDLNDPS (79 aa)) is disordered. The segment covering 48–67 (PQQTAVSEEAPSSSSKETNP) has biased composition (polar residues). The 483-residue stretch at 101–583 (KETIRDLNDP…AGAVDAKKAS (483 aa)) folds into the Peptidase S8 domain. Over residues 102–111 (ETIRDLNDPS) the composition is skewed to basic and acidic residues. Residues Asp-132, His-195, and Ser-514 each act as charge relay system in the active site. The interval 1028 to 1135 (NLLEGHSNKP…RDQLPTTNDK (108 aa)) is disordered. Basic and acidic residues-rich tracts occupy residues 1033 to 1056 (HSNKPEQDGSDQVPDKTPETKPEQ), 1063 to 1073 (PDKKPEAKPEQ), and 1080 to 1092 (PDKKPETKPEKDS). 4 tandem repeats follow at residues 1036–1052 (KPEQDGSDQVPDKTPET), 1053–1069 (KPEQDGSGQAPDKKPEA), 1070–1086 (KPEQDGSGQAPDKKPET), and 1087–1103 (KPEKDSSGQTPGKTPQK). Residues 1036–1103 (KPEQDGSDQV…GQTPGKTPQK (68 aa)) form a 4 X 17 AA tandem repeats region. Over residues 1093–1108 (SGQTPGKTPQKGQPSR) the composition is skewed to polar residues. The LPXTG sorting signal motif lies at 1129-1133 (LPTTN). Pentaglycyl murein peptidoglycan amidated threonine is present on Thr-1132. A propeptide spans 1133–1169 (NDKDTNRLHLLKLVMTTFFFGLVAHIFKTKRQKETKK) (removed by sortase).

It belongs to the peptidase S8 family. Post-translationally, cleaved by SpeB protease; leading to its degradation. Degradation by SpeB is probably strictly regulated to preserve integrity of C5a peptidase.

It localises to the secreted. The protein resides in the cell wall. The enzyme catalyses The primary cleavage site is at 67-His-|-Lys-68 in human C5a with a minor secondary cleavage site at 58-Ala-|-Ser-59.. This virulence factor of S.pyogenes specifically cleaves the human serum chemotaxin C5a at '68-Lys-|-Asp-69' bond near its C-terminus, destroying its ability to serve as a chemoattractant. In Streptococcus pyogenes serotype M3 (strain ATCC BAA-595 / MGAS315), this protein is C5a peptidase (scpA).